A 356-amino-acid chain; its full sequence is Tyrosine recombinase XerS (356 aa).

Residues 16–121 (LMPWYVLEYY…ALSSLYKYLT (106 aa)) form the Core-binding (CB) domain. Residues 169 to 354 (GFLTYIDQEH…VSDEQKNALD (186 aa)) enclose the Tyr recombinase domain. Active-site residues include Arg210, Lys234, His306, Arg309, and His332. Tyr341 functions as the O-(3'-phospho-DNA)-tyrosine intermediate in the catalytic mechanism.

Belongs to the 'phage' integrase family. XerS subfamily.

The protein localises to the cytoplasm. FtsK is required for recombination. Functionally, site-specific tyrosine recombinase, which acts by catalyzing the cutting and rejoining of the recombining DNA molecules. Essential to convert dimers of the bacterial chromosome into monomers to permit their segregation at cell division. The polypeptide is Tyrosine recombinase XerS (Streptococcus pneumoniae (strain 70585)).